Reading from the N-terminus, the 447-residue chain is Glucose-6-phosphate isomerase (447 aa).

E288 functions as the Proton donor in the catalytic mechanism. Catalysis depends on residues H309 and K423.

It belongs to the GPI family.

The protein resides in the cytoplasm. It catalyses the reaction alpha-D-glucose 6-phosphate = beta-D-fructose 6-phosphate. Its pathway is carbohydrate biosynthesis; gluconeogenesis. It participates in carbohydrate degradation; glycolysis; D-glyceraldehyde 3-phosphate and glycerone phosphate from D-glucose: step 2/4. Its function is as follows. Catalyzes the reversible isomerization of glucose-6-phosphate to fructose-6-phosphate. The polypeptide is Glucose-6-phosphate isomerase (Lactobacillus johnsonii (strain CNCM I-12250 / La1 / NCC 533)).